The sequence spans 898 residues: Putative disease resistance protein At1g63350 (898 aa).

The stretch at 24–88 forms a coiled coil; that stretch reads VSYTHNLEKN…IESRVNDLLN (65 aa). An NB-ARC domain is found at 137–440; the sequence is DQASTSEVEE…CEEIIDGSEG (304 aa). 179–186 contributes to the ATP binding site; that stretch reads GMGGVGKT. 6 LRR repeats span residues 516–537, 538–559, 562–584, 586–608, 609–631, and 632–654; these read VVRR…LDCM, ELTT…FFNS, KLAV…ISEL, SLQY…QELK, KLIH…SCLH, and NLKV…KELE.

It belongs to the disease resistance NB-LRR family.

In terms of biological role, potential disease resistance protein. In Arabidopsis thaliana (Mouse-ear cress), this protein is Putative disease resistance protein At1g63350.